The following is a 197-amino-acid chain: Dehydrin DHN1 (197 aa).

Residues 1-14 are compositionally biased toward polar residues; that stretch reads MSQYQNQYGAQTGM. Disordered regions lie at residues 1–86 and 133–197; these read MSQY…GTNP and GTEQ…CTGH. 2 consecutive repeat copies span residues 16 to 21 and 26 to 31. The interval 16 to 31 is 2 X approximate repeats; sequence DEYGNPVNQVDQYGNP. Positions 74–83 are enriched in gly residues; that stretch reads THTGGVGGYG. The stretch at 126 to 133 is one 2-1 repeat; sequence KIKEKIPG. The segment at 126–190 is 2 X approximate repeats; sequence KIKEKIPGTE…MDKIKEKLPG (65 aa). The segment covering 144–160 has biased composition (gly residues); that stretch reads AGYGSTGYGASGGGIGN. A compositionally biased stretch (basic and acidic residues) spans 165-188; the sequence is YVREEHRVDHGEKKGIMDKIKEKL. The stretch at 183–190 is one 2-2 repeat; sequence KIKEKLPG.

It belongs to the plant dehydrin family. In terms of tissue distribution, shoots, roots, and cotyledon from dehydrating seedlings.

The sequence is that of Dehydrin DHN1 (DHN1) from Pisum sativum (Garden pea).